We begin with the raw amino-acid sequence, 314 residues long: Ferrochelatase (314 aa).

Fe cation-binding residues include histidine 184 and glutamate 259.

It belongs to the ferrochelatase family.

The protein resides in the cytoplasm. It carries out the reaction heme b + 2 H(+) = protoporphyrin IX + Fe(2+). It functions in the pathway porphyrin-containing compound metabolism; protoheme biosynthesis; protoheme from protoporphyrin-IX: step 1/1. Its function is as follows. Catalyzes the ferrous insertion into protoporphyrin IX. This is Ferrochelatase from Chlamydia trachomatis serovar L2 (strain ATCC VR-902B / DSM 19102 / 434/Bu).